Reading from the N-terminus, the 120-residue chain is MEKLFNRSDRIAQELQKKIAAIIQHSLKDPRIKTIITVSEVQVSKDLSYAQIFVSFLESDNNEKVKKKITILNRASSYIRKLLCKRMKLRIVPNIIFHHDDSFLKGNKISCILENLTKKE.

Belongs to the RbfA family. In terms of assembly, monomer. Binds 30S ribosomal subunits, but not 50S ribosomal subunits or 70S ribosomes.

It localises to the cytoplasm. One of several proteins that assist in the late maturation steps of the functional core of the 30S ribosomal subunit. Associates with free 30S ribosomal subunits (but not with 30S subunits that are part of 70S ribosomes or polysomes). Required for efficient processing of 16S rRNA. May interact with the 5'-terminal helix region of 16S rRNA. The chain is Ribosome-binding factor A from Buchnera aphidicola subsp. Acyrthosiphon pisum (strain 5A).